A 402-amino-acid polypeptide reads, in one-letter code: S-adenosylmethionine synthase (402 aa).

Residue H16 coordinates ATP. Mg(2+) is bound at residue D18. E44 serves as a coordination point for K(+). The L-methionine site is built by E57 and Q109. The tract at residues 109–119 (QSAHIAQGVDA) is flexible loop. Residues 174–176 (DTK), D252, 258–259 (RK), A275, and K279 contribute to the ATP site. Position 252 (D252) interacts with L-methionine. K283 contributes to the L-methionine binding site.

The protein belongs to the AdoMet synthase family. Homotetramer; dimer of dimers. The cofactor is Mg(2+). It depends on K(+) as a cofactor.

The protein resides in the cytoplasm. The catalysed reaction is L-methionine + ATP + H2O = S-adenosyl-L-methionine + phosphate + diphosphate. The protein operates within amino-acid biosynthesis; S-adenosyl-L-methionine biosynthesis; S-adenosyl-L-methionine from L-methionine: step 1/1. Catalyzes the formation of S-adenosylmethionine (AdoMet) from methionine and ATP. The overall synthetic reaction is composed of two sequential steps, AdoMet formation and the subsequent tripolyphosphate hydrolysis which occurs prior to release of AdoMet from the enzyme. In Rhizorhabdus wittichii (strain DSM 6014 / CCUG 31198 / JCM 15750 / NBRC 105917 / EY 4224 / RW1) (Sphingomonas wittichii), this protein is S-adenosylmethionine synthase.